The sequence spans 316 residues: Phosphoribosylaminoimidazole-succinocarboxamide synthase (316 aa).

Belongs to the SAICAR synthetase family.

It catalyses the reaction 5-amino-1-(5-phospho-D-ribosyl)imidazole-4-carboxylate + L-aspartate + ATP = (2S)-2-[5-amino-1-(5-phospho-beta-D-ribosyl)imidazole-4-carboxamido]succinate + ADP + phosphate + 2 H(+). Its pathway is purine metabolism; IMP biosynthesis via de novo pathway; 5-amino-1-(5-phospho-D-ribosyl)imidazole-4-carboxamide from 5-amino-1-(5-phospho-D-ribosyl)imidazole-4-carboxylate: step 1/2. In Flavobacterium psychrophilum (strain ATCC 49511 / DSM 21280 / CIP 103535 / JIP02/86), this protein is Phosphoribosylaminoimidazole-succinocarboxamide synthase.